The primary structure comprises 344 residues: Uroporphyrinogen decarboxylase (344 aa).

Substrate contacts are provided by residues 26–30, aspartate 75, tyrosine 150, serine 205, and histidine 323; that span reads RQAGR.

The protein belongs to the uroporphyrinogen decarboxylase family. As to quaternary structure, homodimer.

The protein localises to the cytoplasm. The enzyme catalyses uroporphyrinogen III + 4 H(+) = coproporphyrinogen III + 4 CO2. Its pathway is porphyrin-containing compound metabolism; protoporphyrin-IX biosynthesis; coproporphyrinogen-III from 5-aminolevulinate: step 4/4. Functionally, catalyzes the decarboxylation of four acetate groups of uroporphyrinogen-III to yield coproporphyrinogen-III. The chain is Uroporphyrinogen decarboxylase from Corynebacterium diphtheriae (strain ATCC 700971 / NCTC 13129 / Biotype gravis).